Reading from the N-terminus, the 151-residue chain is Large ribosomal subunit protein uL13 (151 aa).

The protein belongs to the universal ribosomal protein uL13 family. As to quaternary structure, part of the 50S ribosomal subunit.

This protein is one of the early assembly proteins of the 50S ribosomal subunit, although it is not seen to bind rRNA by itself. It is important during the early stages of 50S assembly. The chain is Large ribosomal subunit protein uL13 from Picosynechococcus sp. (strain ATCC 27264 / PCC 7002 / PR-6) (Agmenellum quadruplicatum).